A 243-amino-acid chain; its full sequence is Urease accessory protein UreF 2 (243 aa).

Belongs to the UreF family. In terms of assembly, ureD, UreF and UreG form a complex that acts as a GTP-hydrolysis-dependent molecular chaperone, activating the urease apoprotein by helping to assemble the nickel containing metallocenter of UreC. The UreE protein probably delivers the nickel.

Its subcellular location is the cytoplasm. Functionally, required for maturation of urease via the functional incorporation of the urease nickel metallocenter. Disrupting the ure2 operon has no effect on urease activity or pathogen survival in BALB/c mice when administered orally. In Brucella abortus (strain 2308), this protein is Urease accessory protein UreF 2.